Consider the following 150-residue polypeptide: Large ribosomal subunit protein uL15 (150 aa).

Residues 1 to 57 (MSLTLQSLKPQKGARRRKMRKGRGIAAGQGASCGFGMRGQKSRSGRPTRPGFEGGQM) form a disordered region. Over residues 12–23 (KGARRRKMRKGR) the composition is skewed to basic residues. Residues 25 to 37 (IAAGQGASCGFGM) are compositionally biased toward gly residues.

This sequence belongs to the universal ribosomal protein uL15 family. As to quaternary structure, part of the 50S ribosomal subunit.

In terms of biological role, binds to the 23S rRNA. The chain is Large ribosomal subunit protein uL15 from Synechococcus sp. (strain RCC307).